A 153-amino-acid polypeptide reads, in one-letter code: 3-hydroxyacyl-[acyl-carrier-protein] dehydratase FabZ (153 aa).

Residue His-47 is part of the active site.

This sequence belongs to the thioester dehydratase family. FabZ subfamily.

The protein localises to the cytoplasm. The enzyme catalyses a (3R)-hydroxyacyl-[ACP] = a (2E)-enoyl-[ACP] + H2O. Involved in unsaturated fatty acids biosynthesis. Catalyzes the dehydration of short chain beta-hydroxyacyl-ACPs and long chain saturated and unsaturated beta-hydroxyacyl-ACPs. This chain is 3-hydroxyacyl-[acyl-carrier-protein] dehydratase FabZ, found in Dichelobacter nodosus (strain VCS1703A).